The sequence spans 163 residues: Peptidyl-prolyl cis-trans isomerase FKBP15-2 (163 aa).

Positions 1-25 (MASKMSLRYSLFLIFFSLISLQGFA) are cleaved as a signal peptide. Positions 52 to 140 (GDTIKVHYRG…IFDTELIAVN (89 aa)) constitute a PPIase FKBP-type domain. The segment at 142–163 (KPAGGEEYGGDEDDEGYGNDEL) is disordered. Acidic residues predominate over residues 149 to 163 (YGGDEDDEGYGNDEL). The Prevents secretion from ER motif lies at 160-163 (NDEL).

The protein belongs to the FKBP-type PPIase family.

The protein resides in the endoplasmic reticulum lumen. It carries out the reaction [protein]-peptidylproline (omega=180) = [protein]-peptidylproline (omega=0). PPIases accelerate the folding of proteins. It catalyzes the cis-trans isomerization of proline imidic peptide bonds in oligopeptides. This Arabidopsis thaliana (Mouse-ear cress) protein is Peptidyl-prolyl cis-trans isomerase FKBP15-2 (FKBP15-2).